The following is a 417-amino-acid chain: Phosphoglycerate kinase (417 aa).

Positions 23, 24, 25, 26, 38, 39, 62, 63, 65, 66, 121, 122, 169, and 170 each coordinate (2R)-3-phosphoglycerate. Position 213 (Gly-213) interacts with ADP. Gly-213 contacts CDP. The AMP site is built by Ala-214 and Lys-215. Position 214 (Ala-214) interacts with ATP. Ala-214 contributes to the Mg(2+) binding site. Asp-218 contacts CDP. Residue Asp-218 participates in Mg(2+) binding. Lys-219 contributes to the AMP binding site. Lys-219 is a binding site for ATP. Gly-237 provides a ligand contact to ADP. CDP is bound at residue Gly-237. AMP is bound by residues Gly-238 and Gly-312. ATP-binding residues include Gly-238 and Gly-312. CDP contacts are provided by Gly-337 and Phe-342. Phe-342 provides a ligand contact to ADP. An AMP-binding site is contributed by Glu-343. ATP-binding residues include Glu-343, Asp-374, and Thr-375. Residue Asp-374 participates in Mg(2+) binding.

This sequence belongs to the phosphoglycerate kinase family. Monomer. Mg(2+) serves as cofactor.

It localises to the cytoplasm. It is found in the mitochondrion. It catalyses the reaction (2R)-3-phosphoglycerate + ATP = (2R)-3-phospho-glyceroyl phosphate + ADP. It participates in carbohydrate degradation; glycolysis; pyruvate from D-glyceraldehyde 3-phosphate: step 2/5. Its function is as follows. Catalyzes one of the two ATP producing reactions in the glycolytic pathway via the reversible conversion of 1,3-diphosphoglycerate to 3-phosphoglycerate. Both L- and D- forms of purine and pyrimidine nucleotides can be used as substrates, but the activity is much lower on pyrimidines. Negatively regulates the biosynthesis of acetyl-CoA from pyruvate in the mitochondrion. This chain is Phosphoglycerate kinase (PGK1), found in Candida maltosa (Yeast).